We begin with the raw amino-acid sequence, 251 residues long: MNFRIVLLVLVASLAGAQAQVIGHDQVRPFPQPKPVTVSDKAAVKFKPQLKIADGCHPYPAVQKDGSITGGLKWSGPQDGECTGSKLGSQIYARSAWVNDVWAIMYAWYFPKGRGAVPLPLITRLFGHRHNWEYVIVWIDNPKSKNSTILGVSMSAAVGYASQTPPEAMYVDGDSVKLEYYYNHLLGSTSLQLTEDTGEFQDLITWDELSKLARYSLNHTDWDETLFDLAGLKMPLKDGVFQELLDKAWPF.

The signal sequence occupies residues 1–19; sequence MNFRIVLLVLVASLAGAQA. Positions 127–133 match the Hepta-peptide GHRHDWE motif motif; it reads GHRHNWE. N-linked (GlcNAc...) asparagine glycosylation is found at Asn146 and Asn218.

Belongs to the Necrosis inducing protein (NPP1) family.

It is found in the secreted. Functionally, secreted effector that contributes strongly to virulence during infection by P.capsici. This is NLP effector protein Pc129485 from Phytophthora capsici.